Consider the following 143-residue polypeptide: Large ribosomal subunit protein uL11 (143 aa).

The protein belongs to the universal ribosomal protein uL11 family. Part of the ribosomal stalk of the 50S ribosomal subunit. Interacts with L10 and the large rRNA to form the base of the stalk. L10 forms an elongated spine to which L12 dimers bind in a sequential fashion forming a multimeric L10(L12)X complex. In terms of processing, one or more lysine residues are methylated.

In terms of biological role, forms part of the ribosomal stalk which helps the ribosome interact with GTP-bound translation factors. This is Large ribosomal subunit protein uL11 from Polynucleobacter asymbioticus (strain DSM 18221 / CIP 109841 / QLW-P1DMWA-1) (Polynucleobacter necessarius subsp. asymbioticus).